The following is a 149-amino-acid chain: Calmodulin (149 aa).

Alanine 2 bears the N-acetylalanine mark. EF-hand domains lie at 8–43, 44–79, 81–116, and 117–149; these read EQIA…LGQN, PTEA…KMKD, DSEE…LGEK, and LTDE…MTAK. Positions 21, 23, 25, 27, 32, 57, 59, 61, 63, 68, 94, 96, 98, 100, and 105 each coordinate Ca(2+). Residue lysine 116 is modified to N6,N6,N6-trimethyllysine. Positions 130, 132, 134, 136, and 141 each coordinate Ca(2+).

The protein belongs to the calmodulin family.

In terms of biological role, calmodulin acts as part of a calcium signal transduction pathway by mediating the control of a large number of enzymes, ion channels, aquaporins and other proteins through calcium-binding. Calcium-binding is required for the activation of calmodulin. Among the enzymes to be stimulated by the calmodulin-calcium complex are a number of protein kinases, such as myosin light-chain kinases and calmodulin-dependent protein kinase type II (CaMK2), and phosphatases. This is Calmodulin (calm) from Oreochromis mossambicus (Mozambique tilapia).